The primary structure comprises 108 residues: Phosphoribosyl-ATP pyrophosphatase (108 aa).

Belongs to the PRA-PH family.

It localises to the cytoplasm. The catalysed reaction is 1-(5-phospho-beta-D-ribosyl)-ATP + H2O = 1-(5-phospho-beta-D-ribosyl)-5'-AMP + diphosphate + H(+). It functions in the pathway amino-acid biosynthesis; L-histidine biosynthesis; L-histidine from 5-phospho-alpha-D-ribose 1-diphosphate: step 2/9. This is Phosphoribosyl-ATP pyrophosphatase from Geobacter sulfurreducens (strain ATCC 51573 / DSM 12127 / PCA).